Reading from the N-terminus, the 297-residue chain is HTH-type transcriptional regulator ArgP (297 aa).

In terms of domain architecture, HTH lysR-type spans 4–60; sequence PDYRTLQALDAVIRERGFERAAQKLCITQSAVSQRIKQLENMFGQPLLVRTVPPRPT. Residues 21–40 constitute a DNA-binding region (H-T-H motif); it reads FERAAQKLCITQSAVSQRIK.

The protein belongs to the LysR transcriptional regulatory family. In terms of assembly, homodimer.

In terms of biological role, controls the transcription of genes involved in arginine and lysine metabolism. This is HTH-type transcriptional regulator ArgP from Citrobacter koseri (strain ATCC BAA-895 / CDC 4225-83 / SGSC4696).